Consider the following 474-residue polypeptide: Tubulin gamma-1 chain (474 aa).

Residue 142–148 participates in GTP binding; that stretch reads AGGTGSG.

This sequence belongs to the tubulin family. In terms of assembly, gamma-tubulin complex is composed of gamma-tubulin and GCP proteins.

It is found in the cytoplasm. Its subcellular location is the cytoskeleton. The protein localises to the microtubule organizing center. The protein resides in the nucleus. It localises to the cell cortex. Functionally, tubulin is the major constituent of microtubules. The gamma chain is found at microtubule organizing centers (MTOC) such as the spindle poles, suggesting that it is involved in the minus-end nucleation of microtubule assembly. Gamma-tubulin complex is essential for the control of microtubular network remodeling in the course of initiation and development of giant-feeding cells, and for the successful reproduction of nematodes (e.g. Meloidogyne spp.) in their plant hosts. The sequence is that of Tubulin gamma-1 chain (TUBG1) from Arabidopsis thaliana (Mouse-ear cress).